The chain runs to 258 residues: Tryptophan synthase alpha chain (258 aa).

Residues Glu52 and Asp63 each act as proton acceptor in the active site.

The protein belongs to the TrpA family. As to quaternary structure, tetramer of two alpha and two beta chains.

It catalyses the reaction (1S,2R)-1-C-(indol-3-yl)glycerol 3-phosphate + L-serine = D-glyceraldehyde 3-phosphate + L-tryptophan + H2O. It participates in amino-acid biosynthesis; L-tryptophan biosynthesis; L-tryptophan from chorismate: step 5/5. Functionally, the alpha subunit is responsible for the aldol cleavage of indoleglycerol phosphate to indole and glyceraldehyde 3-phosphate. This is Tryptophan synthase alpha chain from Streptococcus pneumoniae serotype 4 (strain ATCC BAA-334 / TIGR4).